The chain runs to 442 residues: Tryptophan synthase beta chain 2 (442 aa).

Lysine 110 carries the post-translational modification N6-(pyridoxal phosphate)lysine.

The protein belongs to the TrpB family. As to quaternary structure, tetramer of two alpha and two beta chains. Requires pyridoxal 5'-phosphate as cofactor.

It carries out the reaction (1S,2R)-1-C-(indol-3-yl)glycerol 3-phosphate + L-serine = D-glyceraldehyde 3-phosphate + L-tryptophan + H2O. Its pathway is amino-acid biosynthesis; L-tryptophan biosynthesis; L-tryptophan from chorismate: step 5/5. In terms of biological role, the beta subunit is responsible for the synthesis of L-tryptophan from indole and L-serine. This chain is Tryptophan synthase beta chain 2, found in Thermococcus kodakarensis (strain ATCC BAA-918 / JCM 12380 / KOD1) (Pyrococcus kodakaraensis (strain KOD1)).